A 189-amino-acid polypeptide reads, in one-letter code: MGIDINHKWDRKVRRTRPKSLDVYLSLLVKLYRFLYRRTKKKFNKIVMRRLFMSRTNHPPMSLNRVAHLMKLRGKDEKSVAVVIGTVTNDVRMMDVPKLNVCALRVTDKARQRILKNGGKIYTFDQLALLSPTGRNTVLMQGKRTAREVFKHFGRAPGVPHSNTRPYVQSKGRKFEKARGRRSSCGYKN.

This sequence belongs to the eukaryotic ribosomal protein eL18 family.

The protein resides in the cytoplasm. The chain is Large ribosomal subunit protein eL18 (RpL18) from Anopheles gambiae (African malaria mosquito).